The chain runs to 168 residues: Disulfide bond formation protein B 2 (168 aa).

The Cytoplasmic portion of the chain corresponds to 1–9; sequence MSLACLRSF. Residues 10–26 traverse the membrane as a helical segment; the sequence is FLPALLASTAVLVASFH. Topologically, residues 27–44 are periplasmic; sequence LESVVGLVPCALCFSQRL. An intrachain disulfide couples Cys-36 to Cys-39. The chain crosses the membrane as a helical span at residues 45-61; that stretch reads MLGVYALVCLAALVHSP. Over 62 to 67 the chain is Cytoplasmic; sequence AARGRR. Residues 68-85 form a helical membrane-spanning segment; that stretch reads AYAGLALASAFGGALLAG. Residues 86-140 lie on the Periplasmic side of the membrane; that stretch reads RHVWLQGDPQVVDGCHLPVEQVLQRPLGEILQMFLLGSPDCVSISWSFLDLTLPE. Cys-100 and Cys-126 are oxidised to a cystine. A helical transmembrane segment spans residues 141-159; it reads WSLLAFLLLAAMPLSWLVA. The Cytoplasmic segment spans residues 160-168; the sequence is YRFRKRAMA.

The protein belongs to the DsbB family.

Its subcellular location is the cell inner membrane. Required for disulfide bond formation in some periplasmic proteins. Acts by oxidizing the DsbA protein. The chain is Disulfide bond formation protein B 2 from Pseudomonas entomophila (strain L48).